Here is a 223-residue protein sequence, read N- to C-terminus: Transcriptional regulatory protein PhoP (223 aa).

A Response regulatory domain is found at 2 to 116; sequence RVLVVEDNAL…EVMARMQALM (115 aa). Position 51 is a 4-aspartylphosphate (aspartate 51). The segment at residues 124–222 is a DNA-binding region (ompR/PhoB-type); that stretch reads SQVISLPPFQ…VRGQGYLFEL (99 aa).

In terms of assembly, monomer in the inactive, unphosphorylated state and dimer in the active, phosphorylated state. In terms of processing, phosphorylated by PhoQ.

It is found in the cytoplasm. Its activity is regulated as follows. Feedback inhibited by MgrB, which seems to bind PhoQ, altering its activity and that of downstream effector PhoP. PhoP-regulated transcription is redox-sensitive, being activated when the periplasm becomes more reducing (deletion of dsbA/dsbB, or treatment with dithiothreitol). MgrB acts between DsbA/DsbB and PhoP/PhoQ in this pathway. Functionally, member of the two-component regulatory system PhoP/PhoQ involved in adaptation to low Mg(2+) environments and the control of acid resistance genes. In low periplasmic Mg(2+), PhoQ phosphorylates PhoP, resulting in the expression of PhoP-activated genes (PAG) and repression of PhoP-repressed genes (PRG). In high periplasmic Mg(2+), PhoQ dephosphorylates phospho-PhoP, resulting in the repression of PAG and may lead to expression of some PRG. Mediates magnesium influx to the cytosol by activation of MgtA. Promotes expression of the two-component regulatory system rstA/rstB and transcription of the hemL, mgrB, nagA, slyB, vboR and yrbL genes. The polypeptide is Transcriptional regulatory protein PhoP (phoP) (Escherichia coli (strain K12)).